Here is an 823-residue protein sequence, read N- to C-terminus: Leucine--tRNA ligase (823 aa).

A 'HIGH' region motif is present at residues 42 to 52; it reads PYPSGTLHMGH. The 'KMSKS' region motif lies at 575–579; that stretch reads KMSKS. Residue lysine 578 coordinates ATP.

It belongs to the class-I aminoacyl-tRNA synthetase family.

The protein localises to the cytoplasm. It catalyses the reaction tRNA(Leu) + L-leucine + ATP = L-leucyl-tRNA(Leu) + AMP + diphosphate. This is Leucine--tRNA ligase from Legionella pneumophila (strain Lens).